A 413-amino-acid polypeptide reads, in one-letter code: RNA-binding protein 41 (413 aa).

Positions 225–247 are disordered; that stretch reads SGSGTAEKPSLLQDKGKQAAQGK. In terms of domain architecture, RRM spans 309–387; the sequence is KVLYLKNLSP…KILVIEFAKS (79 aa).

Functionally, may bind RNA. This is RNA-binding protein 41 (Rbm41) from Mus musculus (Mouse).